A 520-amino-acid chain; its full sequence is Sensory neuron membrane protein 1 (520 aa).

Residues 1 to 5 (MKPKK) lie on the Cytoplasmic side of the membrane. Residues 6–26 (LGIIGGSLLAFGILICAIAFP) traverse the membrane as a helical segment. At 27-451 (PFLRSQVKKQ…KLKTVFKTIS (425 aa)) the chain is on the extracellular side. 3 N-linked (GlcNAc...) asparagine glycosylation sites follow: asparagine 64, asparagine 224, and asparagine 268. 3 disulfide bridges follow: cysteine 264/cysteine 329, cysteine 293/cysteine 348, and cysteine 331/cysteine 337. Residues 452-472 (IVGFMKWFTIVSGTCVSGAAA) traverse the membrane as a helical segment. Topologically, residues 473 to 520 (ALFFKNKDKNKLDITKVTPQKGEEKKWPNQMTISTIQSAAVPPNLDAD) are cytoplasmic.

Belongs to the CD36 family.

Its subcellular location is the cell membrane. Its function is as follows. Plays an olfactory role that is not restricted to pheromone sensitivity. The sequence is that of Sensory neuron membrane protein 1 from Apis mellifera (Honeybee).